The sequence spans 35 residues: SKDVMHQMALKFGKPIKLLQQELGADDSVVKDFLD.

This sequence belongs to the PBP/GOBP family. As to quaternary structure, homodimer. Antenna.

Its function is as follows. This major soluble protein in olfactory sensilla of male moths might serve to solubilize the extremely hydrophobic pheromone molecules and to transport pheromone through the aqueous lymph to receptors located on olfactory cilia. The chain is Pheromone-binding protein 2 from Lymantria dispar (Gypsy moth).